The following is a 362-amino-acid chain: MRHVLIAVILFFLSIGLSAGCAEAGNKTQNQSATEVNASPLQPAEYFIYHNLMNDKGLIKTDFSDQPSYLSESLGLWMEFLLSKNDAPHFQDQYQHLTDSFLMSNHLVTWKIQNGQASGTNALIDDMRIMLSLDQAAAKWGRSDYAQTARDIGTSLKTYNMNNGFFTDFYDSQAASKDVTLSYVMPDALAVLKKNGIIDEETEQRNANVLYSAPLKNGFLPKTYSSETKEYTYDSEINLIDQLYAAWHLPEGDEKASVLADWIKQEFQKNGKLYGRYSAYTKEPAVQYESPSVYALAVLFLTKQHENSSVIKAIYDRMNDFEIHDPVKSYYGGYMSGTQTHSFDNLLPLLAERKLFNENIIQ.

Residues 1–20 (MRHVLIAVILFFLSIGLSAG) form the signal peptide. A lipid anchor (N-palmitoyl cysteine) is attached at cysteine 21. Residue cysteine 21 is the site of S-diacylglycerol cysteine attachment.

It localises to the cell membrane. This Bacillus subtilis (strain 168) protein is Putative lipoprotein YdaJ (ydaJ).